The sequence spans 338 residues: MNGWEKTVRIAIDAMGGDYAPQEIVQGALLARAQLGVDIVLVGSAEAVLPELRRHNAAQSVEIVDAPEQVGMGEEPTIVRRKPNSSIMVTMDLVKQGRAEAAVAAGNTGAAMAAALFRIGRLPGIERPAIGAMLPTLKLGKRVLLLDVGANTDSRPRFLEQFALMGALYSRYVLGVAEPKVGLLNIGEERGKGNELVADAYEMLVKNPHVPFAGNCEGRDVMTGRFDVVVCDGFMGNVLLKFAEGVGLVALQILREELPRGIPGKIGIALMRNNLGQVKQRMDYAAYGGGLLLGVNGVCIIAHGSSKAQGILSAIRLAKEALDNRVLERIQQQLILPM.

Belongs to the PlsX family. In terms of assembly, homodimer. Probably interacts with PlsY.

It localises to the cytoplasm. It catalyses the reaction a fatty acyl-[ACP] + phosphate = an acyl phosphate + holo-[ACP]. It participates in lipid metabolism; phospholipid metabolism. Catalyzes the reversible formation of acyl-phosphate (acyl-PO(4)) from acyl-[acyl-carrier-protein] (acyl-ACP). This enzyme utilizes acyl-ACP as fatty acyl donor, but not acyl-CoA. The protein is Phosphate acyltransferase of Gloeobacter violaceus (strain ATCC 29082 / PCC 7421).